A 38-amino-acid chain; its full sequence is Photosystem II reaction center protein X (38 aa).

Residues 9–29 (IASLTAGALVLSAIGIALIII) traverse the membrane as a helical segment.

The protein belongs to the PsbX family. Type 1 subfamily. In terms of assembly, PSII is composed of 1 copy each of membrane proteins PsbA, PsbB, PsbC, PsbD, PsbE, PsbF, PsbH, PsbI, PsbJ, PsbK, PsbL, PsbM, PsbT, PsbX, PsbY, PsbZ, Psb30/Ycf12, at least 3 peripheral proteins of the oxygen-evolving complex and a large number of cofactors. It forms dimeric complexes.

It localises to the plastid. The protein resides in the chloroplast thylakoid membrane. Involved in the binding and/or turnover of quinones at the Q(B) site of photosystem II (PSII). PSII is a light-driven water plastoquinone oxidoreductase, using light energy to abstract electrons from H(2)O, generating a proton gradient subsequently used for ATP formation. This Thalassiosira pseudonana (Marine diatom) protein is Photosystem II reaction center protein X.